We begin with the raw amino-acid sequence, 103 residues long: Secreted LysM effector Mgx1LysM (103 aa).

Positions 1-18 (MKVTTIIAALLSVAVVDA) are cleaved as a signal peptide. Cystine bridges form between Cys31–Cys89 and Cys62–Cys97. Residues 37 to 85 (IPYVVKKGDTLTHIAHDIYKRKVGICDLAYTNHIGYNPDLIYEDQTLLI) enclose the LysM domain. Residues Gly44, Thr48, Asp75, and Ile77 each coordinate chitin.

It belongs to the secreted LysM effector family. In terms of assembly, forms homodimers in a chitin-independent manner through interactions at the N-termini of Mgx1LysM monomers. Homodimers are further polymerized in a chitin-dependent manner.

Its subcellular location is the secreted. The protein localises to the cell wall. Secreted effector that enables the plant pathogenic fungus to manipulate host defenses for successful infection. Binds chitin and suppresses the chitin-induced reactive oxygen species (ROS) burst. Chitin-induced polymerization of homodimers forms a contiguous Mg1LysM highly oligomeric super-complexe that is anchored to the chitin in the fungal cell wall to prevent hydrolysis by host chitinases. The sequence is that of Secreted LysM effector Mgx1LysM from Zymoseptoria tritici (strain CBS 115943 / IPO323) (Speckled leaf blotch fungus).